A 636-amino-acid chain; its full sequence is Epithelial sodium channel subunit alpha (636 aa).

Positions 1–28 (MKSENQPEDKRIGKLKREANMQKMKEAA) are disordered. Residues 1-77 (MKSENQPEDK…VCSKKNRMKT (77 aa)) lie on the Cytoplasmic side of the membrane. Residues 78 to 98 (AFWSILFFFTFGLMYWQFGII) traverse the membrane as a helical segment. The Extracellular segment spans residues 99–549 (YREYFSFPVN…SQWSLWFGSS (451 aa)). 10 disulfide bridges follow: Cys-126–Cys-293, Cys-218–Cys-225, Cys-270–Cys-277, Cys-381–Cys-466, Cys-403–Cys-443, Cys-403–Cys-462, Cys-407–Cys-458, Cys-416–Cys-443, Cys-416–Cys-466, and Cys-418–Cys-432. Residues 550–570 (VLSVVELVELILDFIAITCIL) form a helical membrane-spanning segment. The Cytoplasmic portion of the chain corresponds to 571–636 (AIHWLNMNRS…LRRVSSQQTE (66 aa)).

The protein belongs to the amiloride-sensitive sodium channel (TC 1.A.6) family. SCNN1A subfamily. Heterotrimer; containing an alpha/SCNN1A, a beta/SCNN1B and a gamma/SCNN1G subunit.

It localises to the apical cell membrane. The protein localises to the cell projection. It is found in the cilium. Its subcellular location is the cytoplasmic granule. The protein resides in the cytoplasm. It localises to the cytoplasmic vesicle. The protein localises to the secretory vesicle. It is found in the acrosome. Its subcellular location is the flagellum. The catalysed reaction is Na(+)(in) = Na(+)(out). With respect to regulation, originally identified and characterized by its inhibition by the diuretic drug amiloride. In terms of biological role, this is one of the three pore-forming subunits of the heterotrimeric epithelial sodium channel (ENaC), a critical regulator of sodium balance and fluid homeostasis. ENaC operates in epithelial tissues, where it mediates the electrodiffusion of sodium ions from extracellular fluid through the apical membrane of cells, with water following osmotically. This chain is Epithelial sodium channel subunit alpha, found in Anolis carolinensis (Green anole).